We begin with the raw amino-acid sequence, 435 residues long: Cytochrome c biogenesis protein CcsB (435 aa).

The next 3 membrane-spanning stretches (helical) occupy residues 11-31 (LRVAIFLLLIIALSSSLGTAL), 69-89 (SDWFLSLLLWLGIALVFCSWR), and 159-179 (VGPLMVHTGLVILMLGAVWGV).

It belongs to the Ccs1/CcsB family. As to quaternary structure, may interact with CcsA.

Its subcellular location is the plastid. It localises to the organellar chromatophore thylakoid membrane. Its function is as follows. Required during biogenesis of c-type cytochromes (cytochrome c6 and cytochrome f) at the step of heme attachment. In Paulinella chromatophora, this protein is Cytochrome c biogenesis protein CcsB.